The following is a 307-amino-acid chain: Glutathione synthetase (307 aa).

The region spanning 120–304 is the ATP-grasp domain; sequence KLGALRFSRW…LADQTIERLR (185 aa). Position 146–202 (146–202) interacts with ATP; the sequence is AREQGDVVLKPLGGRAGLGVIRVQAEAPGLKALLELVTEQERLPVMAQRFLPDVTEG. Positions 275 and 277 each coordinate Mg(2+).

The protein belongs to the prokaryotic GSH synthase family. The cofactor is Mg(2+). It depends on Mn(2+) as a cofactor.

It carries out the reaction gamma-L-glutamyl-L-cysteine + glycine + ATP = glutathione + ADP + phosphate + H(+). It functions in the pathway sulfur metabolism; glutathione biosynthesis; glutathione from L-cysteine and L-glutamate: step 2/2. This Parasynechococcus marenigrum (strain WH8102) protein is Glutathione synthetase.